Here is a 209-residue protein sequence, read N- to C-terminus: FMN-dependent NADH:quinone oxidoreductase 2 (209 aa).

17–19 (SAS) is a binding site for FMN.

The protein belongs to the azoreductase type 1 family. As to quaternary structure, homodimer. The cofactor is FMN.

The catalysed reaction is 2 a quinone + NADH + H(+) = 2 a 1,4-benzosemiquinone + NAD(+). It carries out the reaction N,N-dimethyl-1,4-phenylenediamine + anthranilate + 2 NAD(+) = 2-(4-dimethylaminophenyl)diazenylbenzoate + 2 NADH + 2 H(+). Its function is as follows. Quinone reductase that provides resistance to thiol-specific stress caused by electrophilic quinones. In terms of biological role, also exhibits azoreductase activity. Catalyzes the reductive cleavage of the azo bond in aromatic azo compounds to the corresponding amines. In Lactiplantibacillus plantarum (strain ATCC BAA-793 / NCIMB 8826 / WCFS1) (Lactobacillus plantarum), this protein is FMN-dependent NADH:quinone oxidoreductase 2.